We begin with the raw amino-acid sequence, 318 residues long: MSFRTQPPAPARLNRCQLFGPGSRPAIFEKMAQSAADVINLDLEDSVAPDDKPQARRNIIEASHNIDWGNKYLSVRINGLDTPFWYRDVVELLEDGSERIDQIMIPKVGCAADVYAVDALVTAIEAAKGRKKRISLEVIIESAAGIAHVEEIAAASPRLQAMSLGAADFAASMGMATTGIGGTQENYYMLHAGVKHWSDPWHWAQAAIVAACRTHGILPVDGPFGDFSDDEGFRAQALRSATLGMVGKWAIHPKQVALANEVFTPSDAAVAEAREILAAMEKAKAEGAGATVYKGRLVDIASIRQAEVIVRQAEMAKV.

The substrate site is built by Phe19, Arg24, Lys30, and Arg76. Mg(2+) contacts are provided by Glu141 and Asp168. Residues 167–168 and 251–252 contribute to the substrate site; these read AD and IH.

The protein belongs to the HpcH/HpaI aldolase family. As to quaternary structure, homohexamer. Dimer of trimers. Requires Mg(2+) as cofactor. Mn(2+) serves as cofactor.

It carries out the reaction (S)-malyl-CoA = glyoxylate + acetyl-CoA. It catalyses the reaction (2R,3S)-beta-methylmalyl-CoA = propanoyl-CoA + glyoxylate. Its activity is regulated as follows. In vitro inhibited by EDTA. Functionally, involved in the ethylmalonyl-CoA pathway for acetate assimilation. Catalyzes the reversible condensation of glyoxylate and acetyl-CoA to L-malyl-CoA and the reversible condensation of glyoxylate and propionyl-CoA to beta-methylmalyl-CoA. The polypeptide is L-malyl-CoA/beta-methylmalyl-CoA lyase (Rhodobacter capsulatus (Rhodopseudomonas capsulata)).